The sequence spans 259 residues: Secretion system apparatus protein SsaT (259 aa).

A run of 6 helical transmembrane segments spans residues 9–29, 35–55, 78–98, 127–147, 185–205, and 214–234; these read LIALAVAFIRPLSLSLLLPLL, GAALLRNGVLMSLTFPILPII, VIIGFSIGFCAAVPFWAVDMA, LLFSQFLCVIFFISGGMEFIL, ISFSLPAIICMVLADLALGLL, and VFFFSMPLKSILVLLTLLISF.

Belongs to the FliR/MopE/SpaR family.

The protein localises to the cell membrane. Part of a type III secretion system. The sequence is that of Secretion system apparatus protein SsaT (ssaT) from Salmonella typhimurium (strain LT2 / SGSC1412 / ATCC 700720).